The chain runs to 504 residues: Maturase K (504 aa).

This sequence belongs to the intron maturase 2 family. MatK subfamily.

It localises to the plastid. The protein localises to the chloroplast. Functionally, usually encoded in the trnK tRNA gene intron. Probably assists in splicing its own and other chloroplast group II introns. This chain is Maturase K, found in Quercus cerris (Turkey oak).